The primary structure comprises 1388 residues: Rho-associated protein kinase 2 (1388 aa).

The segment at 1–24 (MSRPPPTGKMPGAPEAVSGDGAGA) is disordered. In terms of domain architecture, Protein kinase spans 92–354 (YDVVKVIGRG…VEEIKQHPFF (263 aa)). Residues 98–106 (IGRGAFGEV) and lysine 121 each bind ATP. Aspartate 214 acts as the Proton acceptor in catalysis. The 69-residue stretch at 357-425 (DQWNWDNIRE…YRENLLLSDS (69 aa)) folds into the AGC-kinase C-terminal domain. An interaction with PPP1R12A region spans residues 363-784 (NIRETAAPVV…INELLKQKDV (422 aa)). An interaction with NPM1 region spans residues 373–420 (PELSSDIDSSNFDDIEDDKGDVETFPIPKAFVGNQLPFIGFTYYRENL). The residue at position 414 (threonine 414) is a Phosphothreonine; by ROCK2. In terms of domain architecture, REM-1 spans 497 to 573 (ALRQLEREKA…LDETNALLRT (77 aa)). The segment covering 512-530 (NAEYQRKADHEADKKRNLE) has biased composition (basic and acidic residues). A disordered region spans residues 512–532 (NAEYQRKADHEADKKRNLEND). Tyrosine 722 bears the Phosphotyrosine; by SRC mark. The RhoBD domain occupies 979-1047 (TSDVANLANE…LAEIMNRKEP (69 aa)). Positions 979–1047 (TSDVANLANE…LAEIMNRKEP (69 aa)) are RHOA binding. A coiled-coil region spans residues 1054–1126 (TDMRRKEKEN…EQLRSQLQAL (73 aa)). At serine 1137 the chain carries Phosphoserine. The PH domain occupies 1150–1349 (ESRLEGWLSL…WVSRLVKKIP (200 aa)). Threonine 1212 bears the Phosphothreonine mark. The Phorbol-ester/DAG-type zinc finger occupies 1260–1315 (GHEFIPTLYHFPTNCEACMKPLWHMFKPPPALECRRCHIKCHKDHMDKKEEIIAPC). The disordered stretch occupies residues 1345–1388 (VKKIPKKPPAPDPFARSSPRTSMKIQQNQSIRRPSRQLAANKPS). Phosphoserine occurs at positions 1362 and 1374. The segment covering 1362 to 1376 (SPRTSMKIQQNQSIR) has biased composition (polar residues).

It belongs to the protein kinase superfamily. AGC Ser/Thr protein kinase family. As to quaternary structure, homodimer. Interacts with IRS1. Interacts with RAF1. Interacts with RHOA (activated by GTP), RHOB and RHOC. Interacts with PPP1R12A. Interacts with EP300. Interacts with CHORDC1. Interacts with BRCA2. Interacts with NPM1; this interaction enhances ROCK2 activity. Interacts with SORL1. Interacts with PJVK. The cofactor is Mg(2+). Post-translationally, autophosphorylated. Phosphorylation at Tyr-722 reduces its binding to RHOA and is crucial for focal adhesion dynamics. Dephosphorylation by PTPN11 stimulates its RHOA binding activity. Cleaved by granzyme B during apoptosis. This leads to constitutive activation of the kinase and membrane blebbing.

The protein localises to the cytoplasm. It is found in the cell membrane. It localises to the nucleus. Its subcellular location is the cytoskeleton. The protein resides in the microtubule organizing center. The protein localises to the centrosome. It catalyses the reaction L-seryl-[protein] + ATP = O-phospho-L-seryl-[protein] + ADP + H(+). The enzyme catalyses L-threonyl-[protein] + ATP = O-phospho-L-threonyl-[protein] + ADP + H(+). Activated by RHOA binding. Inhibited by Y-27632. In terms of biological role, protein kinase which is a key regulator of actin cytoskeleton and cell polarity. Involved in regulation of smooth muscle contraction, actin cytoskeleton organization, stress fiber and focal adhesion formation, neurite retraction, cell adhesion and motility via phosphorylation of ADD1, BRCA2, CNN1, EZR, DPYSL2, EP300, MSN, MYL9/MLC2, NPM1, RDX, PPP1R12A and VIM. Phosphorylates SORL1 and IRF4. Acts as a negative regulator of VEGF-induced angiogenic endothelial cell activation. Positively regulates the activation of p42/MAPK1-p44/MAPK3 and of p90RSK/RPS6KA1 during myogenic differentiation. Plays an important role in the timely initiation of centrosome duplication. Inhibits keratinocyte terminal differentiation. May regulate closure of the eyelids and ventral body wall through organization of actomyosin bundles. Plays a critical role in the regulation of spine and synaptic properties in the hippocampus. Plays an important role in generating the circadian rhythm of the aortic myofilament Ca(2+) sensitivity and vascular contractility by modulating the myosin light chain phosphorylation. This Sus scrofa (Pig) protein is Rho-associated protein kinase 2 (ROCK2).